The following is a 598-amino-acid chain: Fibulin-1 (598 aa).

31 disulfide bridges follow: A1/C25, C7/C26, C28/C52, C29/C59, C42/C60, C96/C106, C102/C115, C117/C130, C136/C149, C143/C158, C164/C176, C182/C195, C189/C204, C210/C222, C228/C242, C257/C270, C275/C288, C282/C297, C299/C312, C318/C330, C326/C339, C341/C354, C360/C369, C365/C378, C380/C394, C400/C413, C409/C422, C424/C438, C444/C457, C451/C466, and C471/C483. Anaphylatoxin-like domains are found at residues A1–H27 and C28–C60. N14 carries N-linked (GlcNAc...) asparagine glycosylation. Residues L92 to E131 enclose the EGF-like 1 domain. Residues D132–K177 enclose the EGF-like 2; calcium-binding domain. The region spanning D178–I223 is the EGF-like 3; calcium-binding domain. An EGF-like 4; calcium-binding domain is found at D224 to C270. The 43-residue stretch at D271–V313 folds into the EGF-like 5; calcium-binding domain. Positions D271–E355 are self-association and FN1-binding. An EGF-like 6; calcium-binding domain is found at D314–E355. One can recognise an EGF-like 7; calcium-binding domain in the interval D356–E395. The EGF-like 8; calcium-binding domain occupies D396–Q439. One can recognise an EGF-like 9; calcium-binding domain in the interval D440–E484. N-linked (GlcNAc...) asparagine glycosylation is found at N450 and N454.

It belongs to the fibulin family. Homomultimerizes and interacts with various extracellular matrix components. Interacts with FBLN7. Interacts with the mature/soluble form of DTR. Interacts with CCN3.

The protein resides in the secreted. It is found in the extracellular space. It localises to the extracellular matrix. In terms of biological role, incorporated into fibronectin-containing matrix fibers. May play a role in cell adhesion and migration along protein fibers within the extracellular matrix (ECM). Could be important for certain developmental processes and contribute to the supramolecular organization of ECM architecture, in particular to those of basement membranes. May serve to anchor the mature/soluble form of DTR to its fibers as it migrates through the extracellular matrix. The direct physical association with DTR may be useful in such tissue developmental processes as wound healing. The protein is Fibulin-1 (FBLN1) of Chlorocebus aethiops (Green monkey).